Here is a 634-residue protein sequence, read N- to C-terminus: uncharacterized protein (634 aa).

Positions 1 to 40 (MWLQQRLKGLPGLLSSSWARRLLCLLGLLVLLLWFASSGA) are cleaved as a signal peptide. Topologically, residues 41-589 (RRAAGGLHLP…DEHMAQQDPG (549 aa)) are extracellular. Residue N363 is glycosylated (N-linked (GlcNAc...) asparagine). The chain crosses the membrane as a helical span at residues 590-610 (LPFLFWFSVASLITLFHLFLF). At 611–634 (KLIYNEYCGPGAKPLFRSKEDPSV) the chain is on the cytoplasmic side.

It localises to the membrane. This is an uncharacterized protein from Mus musculus (Mouse).